The following is a 173-amino-acid chain: Archaemetzincin (173 aa).

His130 is a binding site for Zn(2+). The active-site Proton acceptor is Glu131. Residues His134, His140, Cys141, Cys146, Cys165, and Cys168 each coordinate Zn(2+).

This sequence belongs to the peptidase M54 family. In terms of assembly, monomer. Zn(2+) serves as cofactor.

Probable zinc metalloprotease whose natural substrate is unknown. The chain is Archaemetzincin from Haloquadratum walsbyi (strain DSM 16790 / HBSQ001).